The sequence spans 179 residues: MILYLHGFDATSPGNHEKMRQLQFIDKDVRLVSYSTLHPKHDMQHLLNEVSRQLQQSDDSDPIIIGVGLGAYWAERIGFLNGIRSVLINPNLNPQENMVGRIDRPEEYADIAGKCVSEFRGKNQGKALVILSRKDQVNDNQSVSEQLGGFYQICWDEEQPHKFPVLASHLPQINLFKQA.

Belongs to the UPF0227 family.

This Shewanella sediminis (strain HAW-EB3) protein is UPF0227 protein Ssed_2836.